The primary structure comprises 469 residues: Adenosylhomocysteinase (469 aa).

Substrate is bound by residues threonine 63, aspartate 139, and glutamate 164. 165-167 (TTT) contacts NAD(+). The substrate site is built by lysine 194 and aspartate 198. NAD(+)-binding positions include asparagine 199, 228 to 233 (GYGDVG), glutamate 251, asparagine 300, 321 to 323 (IGH), and asparagine 375.

Belongs to the adenosylhomocysteinase family. Requires NAD(+) as cofactor.

The protein localises to the cytoplasm. It catalyses the reaction S-adenosyl-L-homocysteine + H2O = L-homocysteine + adenosine. It participates in amino-acid biosynthesis; L-homocysteine biosynthesis; L-homocysteine from S-adenosyl-L-homocysteine: step 1/1. May play a key role in the regulation of the intracellular concentration of adenosylhomocysteine. This Pseudomonas syringae pv. syringae (strain B728a) protein is Adenosylhomocysteinase.